Reading from the N-terminus, the 201-residue chain is Recombination protein RecR (201 aa).

Residues 60-75 (CSRCGNVDTVDPCTVC) form a C4-type zinc finger. A Toprim domain is found at 83–178 (SIIIVVEDVS…KITRLAHGVP (96 aa)).

Belongs to the RecR family.

May play a role in DNA repair. It seems to be involved in an RecBC-independent recombinational process of DNA repair. It may act with RecF and RecO. The protein is Recombination protein RecR of Rhizobium leguminosarum bv. trifolii (strain WSM2304).